A 356-amino-acid polypeptide reads, in one-letter code: 7,8-didemethyl-8-hydroxy-5-deazariboflavin synthase (356 aa).

A Radical SAM core domain is found at 40–280 (ITYSKNVFIP…KDISIQVPPN (241 aa)). 3 residues coordinate [4Fe-4S] cluster: C54, C58, and C61.

It belongs to the radical SAM superfamily. CofG family. Consists of two subunits, CofG and CofH. [4Fe-4S] cluster serves as cofactor.

The catalysed reaction is 5-amino-5-(4-hydroxybenzyl)-6-(D-ribitylimino)-5,6-dihydrouracil + S-adenosyl-L-methionine = 7,8-didemethyl-8-hydroxy-5-deazariboflavin + 5'-deoxyadenosine + L-methionine + NH4(+) + H(+). It participates in cofactor biosynthesis; coenzyme F0 biosynthesis. In terms of biological role, catalyzes the radical-mediated synthesis of 7,8-didemethyl-8-hydroxy-5-deazariboflavin from 5-amino-5-(4-hydroxybenzyl)-6-(D-ribitylimino)-5,6-dihydrouracil. The polypeptide is 7,8-didemethyl-8-hydroxy-5-deazariboflavin synthase (Methanococcus aeolicus (strain ATCC BAA-1280 / DSM 17508 / OCM 812 / Nankai-3)).